A 142-amino-acid polypeptide reads, in one-letter code: Large ribosomal subunit protein uL13 (142 aa).

The protein belongs to the universal ribosomal protein uL13 family. Part of the 50S ribosomal subunit.

Its function is as follows. This protein is one of the early assembly proteins of the 50S ribosomal subunit, although it is not seen to bind rRNA by itself. It is important during the early stages of 50S assembly. The sequence is that of Large ribosomal subunit protein uL13 from Acidithiobacillus ferrooxidans (strain ATCC 23270 / DSM 14882 / CIP 104768 / NCIMB 8455) (Ferrobacillus ferrooxidans (strain ATCC 23270)).